We begin with the raw amino-acid sequence, 314 residues long: MKKGINRVVLVGTGAVGCSYAYCMINQAVAEEFVLVDVNEAKAEGEAMDLSHAVPFAPAPTRVWKGSYEDCKDADLVVITAGLPQKPGETRLDLVEKNAKIFKQIVRSIMDSGFDGIFLIATNPVDILTYVTWKESGLPKERVIGSGTTLDSARFRYMLGEYFDIGPHNIHAYIIGEHGDTELPVWSHVSVGIQKLQTLLEKDNTYNQEDLDKIFINVRDAAYHIIERKGATYYGIGMSLLRVTKAILNDENSVLTVSAYLEGQYGQKDVYIGVPAVLNRGGVREILEVELSEDEELKFDHSVQVLKETMAPVL.

NAD(+)-binding positions include Val16, Asp37, Lys42, Tyr68, and 82–83 (GL). Substrate contacts are provided by residues Gln85, Arg91, and 123–126 (NPVD). NAD(+)-binding positions include 121–123 (ATN) and Ser146. 151-154 (DSAR) provides a ligand contact to substrate. Beta-D-fructose 1,6-bisphosphate is bound by residues Arg156 and His171. Catalysis depends on His178, which acts as the Proton acceptor. A Phosphotyrosine modification is found at Tyr223. A substrate-binding site is contributed by Thr232.

Belongs to the LDH/MDH superfamily. LDH family. In terms of assembly, homotetramer.

The protein localises to the cytoplasm. The enzyme catalyses (S)-lactate + NAD(+) = pyruvate + NADH + H(+). It participates in fermentation; pyruvate fermentation to lactate; (S)-lactate from pyruvate: step 1/1. With respect to regulation, allosterically activated by fructose 1,6-bisphosphate (FBP). Its function is as follows. Catalyzes the conversion of lactate to pyruvate. The polypeptide is L-lactate dehydrogenase 1 (Bacillus cereus (strain ATCC 14579 / DSM 31 / CCUG 7414 / JCM 2152 / NBRC 15305 / NCIMB 9373 / NCTC 2599 / NRRL B-3711)).